The following is a 422-amino-acid chain: Adenylosuccinate synthetase (422 aa).

Residues 11–17 and 39–41 each bind GTP; these read GDEGKGK and GHT. Asp12 (proton acceptor) is an active-site residue. Residues Asp12 and Gly39 each contribute to the Mg(2+) site. IMP-binding positions include 12–15, 37–40, Thr129, Arg143, Asn219, Thr234, and Arg298; these read DEGK and NAGH. His40 (proton donor) is an active-site residue. 294-300 provides a ligand contact to substrate; that stretch reads VTTGRKR. Residues Arg300, 326–328, and 411–413 each bind GTP; these read KLD and GTG.

This sequence belongs to the adenylosuccinate synthetase family. As to quaternary structure, homodimer. Mg(2+) serves as cofactor.

Its subcellular location is the cytoplasm. It catalyses the reaction IMP + L-aspartate + GTP = N(6)-(1,2-dicarboxyethyl)-AMP + GDP + phosphate + 2 H(+). It functions in the pathway purine metabolism; AMP biosynthesis via de novo pathway; AMP from IMP: step 1/2. Functionally, plays an important role in the de novo pathway and in the salvage pathway of purine nucleotide biosynthesis. Catalyzes the first committed step in the biosynthesis of AMP from IMP. The polypeptide is Adenylosuccinate synthetase (Talaromyces marneffei (strain ATCC 18224 / CBS 334.59 / QM 7333) (Penicillium marneffei)).